The sequence spans 293 residues: Bifunctional protein FolD (293 aa).

NADP(+) is bound by residues 165 to 167 (GRG), Thr192, and Val233.

The protein belongs to the tetrahydrofolate dehydrogenase/cyclohydrolase family. In terms of assembly, homodimer.

The catalysed reaction is (6R)-5,10-methylene-5,6,7,8-tetrahydrofolate + NADP(+) = (6R)-5,10-methenyltetrahydrofolate + NADPH. It catalyses the reaction (6R)-5,10-methenyltetrahydrofolate + H2O = (6R)-10-formyltetrahydrofolate + H(+). It participates in one-carbon metabolism; tetrahydrofolate interconversion. In terms of biological role, catalyzes the oxidation of 5,10-methylenetetrahydrofolate to 5,10-methenyltetrahydrofolate and then the hydrolysis of 5,10-methenyltetrahydrofolate to 10-formyltetrahydrofolate. The polypeptide is Bifunctional protein FolD (Streptomyces griseus subsp. griseus (strain JCM 4626 / CBS 651.72 / NBRC 13350 / KCC S-0626 / ISP 5235)).